Consider the following 347-residue polypeptide: Protein RecA (347 aa).

An ATP-binding site is contributed by Gly-70–Thr-77.

This sequence belongs to the RecA family.

It is found in the cytoplasm. Its function is as follows. Can catalyze the hydrolysis of ATP in the presence of single-stranded DNA, the ATP-dependent uptake of single-stranded DNA by duplex DNA, and the ATP-dependent hybridization of homologous single-stranded DNAs. It interacts with LexA causing its activation and leading to its autocatalytic cleavage. The protein is Protein RecA of Ruegeria pomeroyi (strain ATCC 700808 / DSM 15171 / DSS-3) (Silicibacter pomeroyi).